The sequence spans 232 residues: 2,3,4,5-tetrahydropyridine-2,6-dicarboxylate N-acetyltransferase (232 aa).

The protein belongs to the transferase hexapeptide repeat family. DapH subfamily.

It catalyses the reaction (S)-2,3,4,5-tetrahydrodipicolinate + acetyl-CoA + H2O = L-2-acetamido-6-oxoheptanedioate + CoA. It participates in amino-acid biosynthesis; L-lysine biosynthesis via DAP pathway; LL-2,6-diaminopimelate from (S)-tetrahydrodipicolinate (acetylase route): step 1/3. Its function is as follows. Catalyzes the transfer of an acetyl group from acetyl-CoA to tetrahydrodipicolinate. This Streptococcus sanguinis (strain SK36) protein is 2,3,4,5-tetrahydropyridine-2,6-dicarboxylate N-acetyltransferase.